The following is a 428-amino-acid chain: Enolase (428 aa).

Gln163 lines the (2R)-2-phosphoglycerate pocket. Glu205 (proton donor) is an active-site residue. Asp242, Glu286, and Asp313 together coordinate Mg(2+). 4 residues coordinate (2R)-2-phosphoglycerate: Lys338, Arg367, Ser368, and Lys389. Residue Lys338 is the Proton acceptor of the active site.

It belongs to the enolase family. Mg(2+) serves as cofactor.

The protein localises to the cytoplasm. It localises to the secreted. Its subcellular location is the cell surface. The catalysed reaction is (2R)-2-phosphoglycerate = phosphoenolpyruvate + H2O. It participates in carbohydrate degradation; glycolysis; pyruvate from D-glyceraldehyde 3-phosphate: step 4/5. Functionally, catalyzes the reversible conversion of 2-phosphoglycerate (2-PG) into phosphoenolpyruvate (PEP). It is essential for the degradation of carbohydrates via glycolysis. The chain is Enolase from Geobacter sulfurreducens (strain ATCC 51573 / DSM 12127 / PCA).